The following is a 319-amino-acid chain: Ribonuclease Z (319 aa).

Residues His-62, His-64, Asp-66, His-67, His-145, Asp-216, and His-274 each contribute to the Zn(2+) site. Asp-66 acts as the Proton acceptor in catalysis.

This sequence belongs to the RNase Z family. In terms of assembly, homodimer. Zn(2+) is required as a cofactor.

The enzyme catalyses Endonucleolytic cleavage of RNA, removing extra 3' nucleotides from tRNA precursor, generating 3' termini of tRNAs. A 3'-hydroxy group is left at the tRNA terminus and a 5'-phosphoryl group is left at the trailer molecule.. Functionally, zinc phosphodiesterase, which displays some tRNA 3'-processing endonuclease activity. Probably involved in tRNA maturation, by removing a 3'-trailer from precursor tRNA. This chain is Ribonuclease Z, found in Synechococcus sp. (strain CC9902).